The following is a 427-amino-acid chain: Glutamyl-tRNA reductase (427 aa).

Substrate is bound by residues 49-52, serine 101, 106-108, and glutamine 112; these read TCNR and EPQ. Cysteine 50 functions as the Nucleophile in the catalytic mechanism. Residue 181-186 coordinates NADP(+); that stretch reads GAGETI. The disordered stretch occupies residues 407–427; sequence FPATPGYRHPPVRPDDADPAP. Over residues 418-427 the composition is skewed to basic and acidic residues; sequence VRPDDADPAP.

Belongs to the glutamyl-tRNA reductase family. As to quaternary structure, homodimer.

It carries out the reaction (S)-4-amino-5-oxopentanoate + tRNA(Glu) + NADP(+) = L-glutamyl-tRNA(Glu) + NADPH + H(+). It functions in the pathway porphyrin-containing compound metabolism; protoporphyrin-IX biosynthesis; 5-aminolevulinate from L-glutamyl-tRNA(Glu): step 1/2. In terms of biological role, catalyzes the NADPH-dependent reduction of glutamyl-tRNA(Glu) to glutamate 1-semialdehyde (GSA). In Stenotrophomonas maltophilia (strain K279a), this protein is Glutamyl-tRNA reductase.